Here is a 251-residue protein sequence, read N- to C-terminus: Ubiquinone/menaquinone biosynthesis C-methyltransferase UbiE (251 aa).

S-adenosyl-L-methionine contacts are provided by residues threonine 74, aspartate 95, 123–124, and serine 140; that span reads NA.

The protein belongs to the class I-like SAM-binding methyltransferase superfamily. MenG/UbiE family.

It carries out the reaction a 2-demethylmenaquinol + S-adenosyl-L-methionine = a menaquinol + S-adenosyl-L-homocysteine + H(+). The catalysed reaction is a 2-methoxy-6-(all-trans-polyprenyl)benzene-1,4-diol + S-adenosyl-L-methionine = a 5-methoxy-2-methyl-3-(all-trans-polyprenyl)benzene-1,4-diol + S-adenosyl-L-homocysteine + H(+). It participates in quinol/quinone metabolism; menaquinone biosynthesis; menaquinol from 1,4-dihydroxy-2-naphthoate: step 2/2. Its pathway is cofactor biosynthesis; ubiquinone biosynthesis. Methyltransferase required for the conversion of demethylmenaquinol (DMKH2) to menaquinol (MKH2) and the conversion of 2-polyprenyl-6-methoxy-1,4-benzoquinol (DDMQH2) to 2-polyprenyl-3-methyl-6-methoxy-1,4-benzoquinol (DMQH2). This Yersinia pestis bv. Antiqua (strain Antiqua) protein is Ubiquinone/menaquinone biosynthesis C-methyltransferase UbiE.